Reading from the N-terminus, the 405-residue chain is Nodal homolog 2-A (405 aa).

The signal sequence occupies residues 1-18; the sequence is MASLGVILFFVIASLIHG. A propeptide spanning residues 19–282 is cleaved from the precursor; it reads KPIHSERKAA…RVTDTRRPRR (264 aa). N-linked (GlcNAc...) asparagine glycans are attached at residues asparagine 71, asparagine 172, and asparagine 343. 3 disulfide bridges follow: cysteine 305–cysteine 371, cysteine 334–cysteine 402, and cysteine 338–cysteine 404.

The protein belongs to the TGF-beta family. In terms of assembly, homodimer; disulfide-linked. Forms heterodimers with the TGF-beta family member derriere. Interacts with tsku; enhances nodal2 activity. As to expression, first localized to the vegetal region of the blastula. Just prior to gastrulation (stage 10), this expression disappears and instead becomes localized to the dorsal marginal zone, with enrichment in the organizer.

It is found in the secreted. Cooperation and regulatory loops of multiple nodals are essential for mesendoderm patterning in early embryos. Essential for mesoderm formation and axial patterning during embryonic development. Activates the activin-like signaling pathway to induce dorsal and ventral mesoderm in animal cap ectoderm. In addition, also dorsalizes ventral marginal zone (VMZ) tissues during gastrulation. Induces muscle actin. Appears to act as both a short-range and long-range morphogen. The unprocessed protein inhibits bmp- and wnt-signaling. This is Nodal homolog 2-A (nodal2-a) from Xenopus laevis (African clawed frog).